We begin with the raw amino-acid sequence, 66 residues long: Neurotoxin Cex11 (66 aa).

Residues 1–64 (KEGYPVNIYT…SYPYPEKSCG (64 aa)) enclose the LCN-type CS-alpha/beta domain. 4 cysteine pairs are disulfide-bonded: Cys12/Cys63, Cys16/Cys39, Cys25/Cys44, and Cys29/Cys46. A Cysteine amide modification is found at Cys63. The propeptide occupies 64–66 (GRK).

It belongs to the long (4 C-C) scorpion toxin superfamily. Sodium channel inhibitor family. Beta subfamily. As to expression, expressed by the venom gland.

Its subcellular location is the secreted. Beta toxins bind voltage-independently at site-4 of sodium channels (Nav) and shift the voltage of activation toward more negative potentials thereby affecting sodium channel activation and promoting spontaneous and repetitive firing. The chain is Neurotoxin Cex11 from Centruroides exilicauda (Bark scorpion).